The chain runs to 279 residues: Ribosome maturation factor RimP (279 aa).

The segment at 197–279 (LAEEGEPEEQ…GAPALRPTPK (83 aa)) is disordered. Residues 199–210 (EEGEPEEQEEGG) show a composition bias toward acidic residues.

It belongs to the RimP family.

It is found in the cytoplasm. Functionally, required for maturation of 30S ribosomal subunits. This chain is Ribosome maturation factor RimP, found in Methylocella silvestris (strain DSM 15510 / CIP 108128 / LMG 27833 / NCIMB 13906 / BL2).